The sequence spans 455 residues: Chromosomal replication initiator protein DnaA (455 aa).

The segment at 1–75 (MDTNNNIEKE…EILSQNKVGM (75 aa)) is domain I, interacts with DnaA modulators. Residues 75–106 (MHLAHSVDVRIEVAPKIQINAQANINYKAIKT) form a domain II region. The domain III, AAA+ region stretch occupies residues 107-321 (SVKDSYTFEN…GAIIKISVNA (215 aa)). The ATP site is built by glycine 151, glycine 153, lysine 154, and threonine 155. Positions 322–455 (NLMNAPIDLN…DKKTAFNSSE (134 aa)) are domain IV, binds dsDNA.

This sequence belongs to the DnaA family. In terms of assembly, oligomerizes as a right-handed, spiral filament on DNA at oriC.

Its subcellular location is the cytoplasm. Plays an essential role in the initiation and regulation of chromosomal replication. ATP-DnaA binds to the origin of replication (oriC) to initiate formation of the DNA replication initiation complex once per cell cycle. Binds the DnaA box (a 9 base pair repeat at the origin) and separates the double-stranded (ds)DNA. Forms a right-handed helical filament on oriC DNA; dsDNA binds to the exterior of the filament while single-stranded (ss)DNA is stabiized in the filament's interior. The ATP-DnaA-oriC complex binds and stabilizes one strand of the AT-rich DNA unwinding element (DUE), permitting loading of DNA polymerase. After initiation quickly degrades to an ADP-DnaA complex that is not apt for DNA replication. Binds acidic phospholipids. This Helicobacter pylori (strain P12) protein is Chromosomal replication initiator protein DnaA.